Consider the following 330-residue polypeptide: Ketol-acid reductoisomerase (NADP(+)) (330 aa).

Positions 1–181 constitute a KARI N-terminal Rossmann domain; it reads MKVLYDDDVN…GLTRAGVIET (181 aa). Residues 24 to 27, Arg-47, Ser-52, and 82 to 85 each bind NADP(+); these read YGSQ and DEIQ. His-107 is an active-site residue. Position 133 (Gly-133) interacts with NADP(+). The KARI C-terminal knotted domain maps to 182 to 327; sequence TYREETETDL…KNLRIACGLQ (146 aa). Mg(2+) contacts are provided by Asp-190, Glu-194, Glu-226, and Glu-230. Ser-251 contacts substrate.

It belongs to the ketol-acid reductoisomerase family. Mg(2+) is required as a cofactor.

The catalysed reaction is (2R)-2,3-dihydroxy-3-methylbutanoate + NADP(+) = (2S)-2-acetolactate + NADPH + H(+). It catalyses the reaction (2R,3R)-2,3-dihydroxy-3-methylpentanoate + NADP(+) = (S)-2-ethyl-2-hydroxy-3-oxobutanoate + NADPH + H(+). Its pathway is amino-acid biosynthesis; L-isoleucine biosynthesis; L-isoleucine from 2-oxobutanoate: step 2/4. It participates in amino-acid biosynthesis; L-valine biosynthesis; L-valine from pyruvate: step 2/4. In terms of biological role, involved in the biosynthesis of branched-chain amino acids (BCAA). Catalyzes an alkyl-migration followed by a ketol-acid reduction of (S)-2-acetolactate (S2AL) to yield (R)-2,3-dihydroxy-isovalerate. In the isomerase reaction, S2AL is rearranged via a Mg-dependent methyl migration to produce 3-hydroxy-3-methyl-2-ketobutyrate (HMKB). In the reductase reaction, this 2-ketoacid undergoes a metal-dependent reduction by NADPH to yield (R)-2,3-dihydroxy-isovalerate. The sequence is that of Ketol-acid reductoisomerase (NADP(+)) from Methanosphaera stadtmanae (strain ATCC 43021 / DSM 3091 / JCM 11832 / MCB-3).